A 360-amino-acid chain; its full sequence is Protein RecA (360 aa).

Gly-65–Thr-72 contacts ATP.

It belongs to the RecA family.

The protein resides in the cytoplasm. Functionally, can catalyze the hydrolysis of ATP in the presence of single-stranded DNA, the ATP-dependent uptake of single-stranded DNA by duplex DNA, and the ATP-dependent hybridization of homologous single-stranded DNAs. It interacts with LexA causing its activation and leading to its autocatalytic cleavage. This chain is Protein RecA, found in Tolumonas auensis (strain DSM 9187 / NBRC 110442 / TA 4).